The sequence spans 613 residues: Azole resistance protein 1 (613 aa).

Residues 1–38 (MKGEPKTYSMSDLSYYGEKAQQQNEKQQKQYVVRRNST) form a disordered region. The Extracellular segment spans residues 1–70 (MKGEPKTYSM…PKGFILYASL (70 aa)). A helical membrane pass occupies residues 71–91 (IALALSLFLAALDIMIVSTII). Residues 92-102 (EEVAKQFGSYS) lie on the Cytoplasmic side of the membrane. The helical transmembrane segment at 103–123 (EIGWLFTGYSLPNALLALIWG) threads the bilayer. The Extracellular portion of the chain corresponds to 124 to 134 (RIATPIGFKET). Residues 135–155 (MLFAIVIFEIGSLISALANSM) traverse the membrane as a helical segment. The Cytoplasmic segment spans residues 156 to 163 (SMLIGGRV). Residues 164–184 (IAGVGGCGIQSLSFVIGSTLV) traverse the membrane as a helical segment. Over 185–189 (EESQR) the chain is Extracellular. Residues 190 to 210 (GILIAVLSCSFAIASVVGPFL) traverse the membrane as a helical segment. Over 211 to 221 (GGVFTSSVTWR) the chain is Cytoplasmic. Residues 222 to 242 (WCFYVNLPIGGLAFFLFLFFY) form a helical membrane-spanning segment. Topologically, residues 243 to 298 (NPGLSTFQETMDNIRKFPSQFIEIVRNVAYHLLKIKGFSKLNGWRKPFMELIFMYD) are extracellular. Residues 299–319 (IIEFVFCSAGFTCILLAFTFG) form a helical membrane-spanning segment. The Cytoplasmic portion of the chain corresponds to 320-329 (GNRYAWNSAS). The helical transmembrane segment at 330 to 350 (IIILFIIGIVLVVLAGIYDFL) threads the bilayer. The Extracellular portion of the chain corresponds to 351-375 (VFPKFNIVKATPHYQPLMSWTNIKK). A helical membrane pass occupies residues 376–396 (PGIFTVNIALFLTCAGYISQF). Topologically, residues 397–414 (TYIVQYFQLIYNDSAWRA) are cytoplasmic. The helical transmembrane segment at 415–435 (AVHLVACIISTVVTAILCGAI) threads the bilayer. The Extracellular portion of the chain corresponds to 436–443 (TDKTRQIK). Residues 444 to 464 (PIIVISSIFGVVGAGILTLLN) traverse the membrane as a helical segment. At 465–472 (NNANNSAH) the chain is on the cytoplasmic side. The chain crosses the membrane as a helical span at residues 473–493 (IGLLILPGVAFGGLAQSSMLA). Residues 494-581 (SQIQLDKKSP…SKLGNIISES (88 aa)) lie on the Extracellular side of the membrane. The helical transmembrane segment at 582 to 602 (LTDVFYMALGFYALSLIFAVF) threads the bilayer. The Cytoplasmic portion of the chain corresponds to 603–613 (ASNKKVTASLR).

The protein belongs to the major facilitator superfamily.

The protein resides in the cell membrane. Transporter protein required for adaptation to high stress imposed by low-chain organic acids, in particular by acetic acid, and for resistance to azoles, especially to ketoconazole and fluconazole. In Saccharomyces cerevisiae (strain ATCC 204508 / S288c) (Baker's yeast), this protein is Azole resistance protein 1 (AZR1).